The following is a 455-amino-acid chain: Golgi pH regulator (455 aa).

Helical transmembrane passes span 5–25 (ADSVLMVISQLLFFGFGWLFF) and 46–66 (VTFAFSCTMFELIIFEILGLL). N-linked (GlcNAc...) asparagine glycosylation occurs at asparagine 67. 3 helical membrane passes run 79 to 99 (LCVILLVLVFVVPFYIGYFVV), 111 to 131 (LFSCTIWLTFMYFFWKLGDPF), and 150 to 170 (VGVIGVTLMALLSGFGAVNCP). Asparagine 180 carries an N-linked (GlcNAc...) asparagine glycan. 4 helical membrane passes run 290–310 (GYFFSIYCVWKIFMATINIVF), 343–363 (ISFILVGIIIVTSIRGLLITL), 378–398 (VIVLLLAQIMGMYFVSSVLLI), and 425–445 (WFDVIFLVSALSSILFLYLAH).

It belongs to the Golgi pH regulator (TC 1.A.38) family. In terms of assembly, homotrimer.

The protein resides in the golgi apparatus membrane. The catalysed reaction is iodide(out) = iodide(in). It carries out the reaction chloride(in) = chloride(out). The enzyme catalyses bromide(in) = bromide(out). It catalyses the reaction fluoride(in) = fluoride(out). In terms of biological role, voltage-gated channel that enables the transfer of anions such as iodide, chloride, bromide and fluoride which may function in counter-ion conductance and participates in Golgi acidification. This chain is Golgi pH regulator (gpr89-b), found in Xenopus laevis (African clawed frog).